Here is a 106-residue protein sequence, read N- to C-terminus: Large ribosomal subunit protein uL24 (106 aa).

It belongs to the universal ribosomal protein uL24 family. In terms of assembly, part of the 50S ribosomal subunit.

One of two assembly initiator proteins, it binds directly to the 5'-end of the 23S rRNA, where it nucleates assembly of the 50S subunit. In terms of biological role, one of the proteins that surrounds the polypeptide exit tunnel on the outside of the subunit. In Erythrobacter litoralis (strain HTCC2594), this protein is Large ribosomal subunit protein uL24.